The chain runs to 608 residues: Lysophospholipase 2 (608 aa).

The first 17 residues, 1–17 (MLVWQSILLFLVGCVLS), serve as a signal peptide directing secretion. The 535-residue stretch at 30 to 564 (QCPEGKLTRS…ENYCWDGTIY (535 aa)) folds into the PLA2c domain. Residues N259, N365, N450, N464, N491, and N572 are each glycosylated (N-linked (GlcNAc...) asparagine).

Belongs to the lysophospholipase family.

Its subcellular location is the secreted. The enzyme catalyses a 1-acyl-sn-glycero-3-phosphocholine + H2O = sn-glycerol 3-phosphocholine + a fatty acid + H(+). Functionally, catalyzes the release of fatty acids from lysophospholipids. Phospholipase B may well contribute to pathogenicity by abetting the fungus in damaging and traversing host cell membranes, processes which likely increase the rapidity of disseminated infection. This Candida albicans (Yeast) protein is Lysophospholipase 2 (PLB2).